We begin with the raw amino-acid sequence, 279 residues long: MTELTRIPLAGVIGLPIAHSRSPALHGYWLKRYGLKGHYIPMDVAQADLRDVLAAMPRMGFVGCNVTIPHKESVIGLADIVTDRAALIGAANTLIFRKDGKIHADNTDGTGFTANLRQNAPAWQPQSGPAVVWGAGGAARAVIAALIEVGVPEIRLANRSRARADALRSDFGAKVHVHDWVQAGNILEDAVTVVNTTSLGMVGKPEFRVPLDALNPKAVVTDLVYAPLRTRLLVEAEAAGCRTVDGLGMLLHQAAPGFERWFGVRPEVDEETRAAVLAT.

Shikimate-binding positions include 20 to 22 (SRS) and threonine 67. The Proton acceptor role is filled by lysine 71. Residue aspartate 83 participates in NADP(+) binding. Shikimate-binding residues include asparagine 92 and aspartate 108. NADP(+) is bound by residues 134 to 138 (GAGGA) and leucine 223. Shikimate is bound at residue tyrosine 225. Glycine 246 lines the NADP(+) pocket.

The protein belongs to the shikimate dehydrogenase family. Homodimer.

It catalyses the reaction shikimate + NADP(+) = 3-dehydroshikimate + NADPH + H(+). The protein operates within metabolic intermediate biosynthesis; chorismate biosynthesis; chorismate from D-erythrose 4-phosphate and phosphoenolpyruvate: step 4/7. Functionally, involved in the biosynthesis of the chorismate, which leads to the biosynthesis of aromatic amino acids. Catalyzes the reversible NADPH linked reduction of 3-dehydroshikimate (DHSA) to yield shikimate (SA). The protein is Shikimate dehydrogenase (NADP(+)) of Cereibacter sphaeroides (strain KD131 / KCTC 12085) (Rhodobacter sphaeroides).